We begin with the raw amino-acid sequence, 474 residues long: tRNA-2-methylthio-N(6)-dimethylallyladenosine synthase (474 aa).

Residues 3–120 form the MTTase N-terminal domain; the sequence is KKLLIKTWGC…LPEMIKQSQS (118 aa). Positions 12, 49, 83, 157, 161, and 164 each coordinate [4Fe-4S] cluster. The Radical SAM core domain occupies 143–375; it reads RAEGATAFVS…QQQINAQAMR (233 aa). Positions 378-441 constitute a TRAM domain; sequence RLMLGTEQRV…ANSLRGEIVR (64 aa).

The protein belongs to the methylthiotransferase family. MiaB subfamily. Monomer. Requires [4Fe-4S] cluster as cofactor.

It localises to the cytoplasm. The enzyme catalyses N(6)-dimethylallyladenosine(37) in tRNA + (sulfur carrier)-SH + AH2 + 2 S-adenosyl-L-methionine = 2-methylsulfanyl-N(6)-dimethylallyladenosine(37) in tRNA + (sulfur carrier)-H + 5'-deoxyadenosine + L-methionine + A + S-adenosyl-L-homocysteine + 2 H(+). Its function is as follows. Catalyzes the methylthiolation of N6-(dimethylallyl)adenosine (i(6)A), leading to the formation of 2-methylthio-N6-(dimethylallyl)adenosine (ms(2)i(6)A) at position 37 in tRNAs that read codons beginning with uridine. The chain is tRNA-2-methylthio-N(6)-dimethylallyladenosine synthase from Vibrio vulnificus (strain CMCP6).